We begin with the raw amino-acid sequence, 243 residues long: Probable transcriptional regulatory protein Tbd_2215 (243 aa).

This sequence belongs to the TACO1 family.

It localises to the cytoplasm. The sequence is that of Probable transcriptional regulatory protein Tbd_2215 from Thiobacillus denitrificans (strain ATCC 25259 / T1).